Reading from the N-terminus, the 356-residue chain is Histidinol-phosphate aminotransferase (356 aa).

An N6-(pyridoxal phosphate)lysine modification is found at Lys-214.

Belongs to the class-II pyridoxal-phosphate-dependent aminotransferase family. Histidinol-phosphate aminotransferase subfamily. As to quaternary structure, homodimer. Requires pyridoxal 5'-phosphate as cofactor.

The catalysed reaction is L-histidinol phosphate + 2-oxoglutarate = 3-(imidazol-4-yl)-2-oxopropyl phosphate + L-glutamate. The protein operates within amino-acid biosynthesis; L-histidine biosynthesis; L-histidine from 5-phospho-alpha-D-ribose 1-diphosphate: step 7/9. This Escherichia fergusonii (strain ATCC 35469 / DSM 13698 / CCUG 18766 / IAM 14443 / JCM 21226 / LMG 7866 / NBRC 102419 / NCTC 12128 / CDC 0568-73) protein is Histidinol-phosphate aminotransferase.